The following is a 434-amino-acid chain: Glycoprotein U20 (434 aa).

An N-terminal signal peptide occupies residues M1–S15. Residues L322 to T342 form a helical membrane-spanning segment.

The protein localises to the host endoplasmic reticulum membrane. Its subcellular location is the host lysosome membrane. Plays a role in the down-regulation of the host stress-induced NKG2D ligand UBPL1, which enables immune cells expressing the NKG2D receptor to recognize and annihilate infected cells prior to viral spread. The protein is Glycoprotein U20 (U20) of Human herpesvirus 6B (strain Z29) (HHV-6 variant B).